We begin with the raw amino-acid sequence, 252 residues long: Geranylgeranylglyceryl phosphate synthase (252 aa).

Residues Asp27 and Ser56 each contribute to the Mg(2+) site. Residues 175–181, 206–207, and 228–229 contribute to the sn-glycerol 1-phosphate site; these read YLEAGSG, GG, and GT.

Belongs to the GGGP/HepGP synthase family. Group II subfamily. It depends on Mg(2+) as a cofactor.

The protein localises to the cytoplasm. The enzyme catalyses sn-glycerol 1-phosphate + (2E,6E,10E)-geranylgeranyl diphosphate = sn-3-O-(geranylgeranyl)glycerol 1-phosphate + diphosphate. Its pathway is membrane lipid metabolism; glycerophospholipid metabolism. Prenyltransferase that catalyzes the transfer of the geranylgeranyl moiety of geranylgeranyl diphosphate (GGPP) to the C3 hydroxyl of sn-glycerol-1-phosphate (G1P). This reaction is the first ether-bond-formation step in the biosynthesis of archaeal membrane lipids. The sequence is that of Geranylgeranylglyceryl phosphate synthase from Pyrococcus abyssi (strain GE5 / Orsay).